The primary structure comprises 318 residues: Mitochondrial coenzyme A transporter SLC25A42 (318 aa).

3 Solcar repeats span residues 31–117 (RQVL…YKRI), 129–214 (LPPW…LKSL), and 224–312 (PYPF…MQIL). 6 consecutive transmembrane segments (helical) span residues 33–53 (VLSSLLSGALAGALAKTAVAP), 89–109 (LWRGNSATMVRVIPYAAIQFS), 135–155 (LLAGALAGTTAASLTYPLDLV), 186–206 (LYFGFTPTVLGVIPYAGLSFF), 230–250 (MVFGACAGLIGQSASYPLDVV), and 293–313 (LKGPIAVGISFTTFDLMQILL).

It belongs to the mitochondrial carrier (TC 2.A.29) family. As to expression, widely expressed. Highly expressed in adipose, followed by hypothalamus and brain coronal sections containing corpus callosum, fornix, thalamus, hypothalamus, optic chiasm, pons, midbrain, and cerebellum.

It localises to the mitochondrion inner membrane. The enzyme catalyses ADP(out) + CoA(in) = ADP(in) + CoA(out). It carries out the reaction 3'-dephospho-CoA(in) + ADP(out) = 3'-dephospho-CoA(out) + ADP(in). It catalyses the reaction adenosine 3',5'-bisphosphate(in) + ADP(out) = adenosine 3',5'-bisphosphate(out) + ADP(in). The catalysed reaction is AMP(in) + ADP(out) = AMP(out) + ADP(in). The enzyme catalyses dADP(in) + ADP(out) = dADP(out) + ADP(in). It carries out the reaction ADP(in) + ATP(out) = ADP(out) + ATP(in). In terms of biological role, mitochondrial carrier mediating the transport of coenzyme A (CoA) in mitochondria in exchange for intramitochondrial (deoxy)adenine nucleotides and adenosine 3',5'-diphosphate. The polypeptide is Mitochondrial coenzyme A transporter SLC25A42 (Slc25a42) (Rattus norvegicus (Rat)).